A 297-amino-acid polypeptide reads, in one-letter code: Urease accessory protein UreD (297 aa).

Residues 1-41 (MPQAADIATAPQRPSAPGDVVAAGQPPRARGRAHVSSKRRD) form a disordered region.

Belongs to the UreD family. In terms of assembly, ureD, UreF and UreG form a complex that acts as a GTP-hydrolysis-dependent molecular chaperone, activating the urease apoprotein by helping to assemble the nickel containing metallocenter of UreC. The UreE protein probably delivers the nickel.

It localises to the cytoplasm. Functionally, required for maturation of urease via the functional incorporation of the urease nickel metallocenter. The protein is Urease accessory protein UreD of Ruegeria sp. (strain TM1040) (Silicibacter sp.).